Reading from the N-terminus, the 185-residue chain is Ubiquitin-conjugating enzyme E2 2 (185 aa).

The region spanning 4–150 is the UBC core domain; that stretch reads PSKKRLIRDF…VKATVEASWL (147 aa). Cys-88 serves as the catalytic Glycyl thioester intermediate. Residues 149–173 are compositionally biased toward acidic residues; that stretch reads WLDDGEMPESIEEDDEAEAEAEAEA. Residues 149–185 form a disordered region; it reads WLDDGEMPESIEEDDEAEAEAEAEATVDRSAPQTASA.

Belongs to the ubiquitin-conjugating enzyme family.

The protein resides in the cytoplasm. Its subcellular location is the nucleus. The catalysed reaction is S-ubiquitinyl-[E1 ubiquitin-activating enzyme]-L-cysteine + [E2 ubiquitin-conjugating enzyme]-L-cysteine = [E1 ubiquitin-activating enzyme]-L-cysteine + S-ubiquitinyl-[E2 ubiquitin-conjugating enzyme]-L-cysteine.. It participates in protein modification; protein ubiquitination. Its function is as follows. Catalyzes the covalent attachment of ubiquitin to other proteins. Plays a role in transcription regulation by catalyzing the monoubiquitination of histone H2B to form H2BK123ub1. H2BK123ub1 gives a specific tag for epigenetic transcriptional activation and is also a prerequisite for H3K4me and H3K79me formation. Also involved in postreplication repair of UV-damaged DNA, in N-end rule-dependent protein degradation and in sporulation. This Mycosarcoma maydis (Corn smut fungus) protein is Ubiquitin-conjugating enzyme E2 2 (UBC2).